Reading from the N-terminus, the 624-residue chain is Steryl-sulfatase (624 aa).

Positions 1-22 (MPRPRPLLLAVMAATLADIILA) are cleaved as a signal peptide. Residues 24–192 (DPAPAGPAPR…GTVFGPALRV (169 aa)) lie on the Lumenal side of the membrane. 2 residues coordinate Ca(2+): Asp-43 and Asp-44. N-linked (GlcNAc...) asparagine glycosylation is present at Asn-55. Cys-83 provides a ligand contact to Ca(2+). Cys-83 serves as the catalytic Nucleophile. Cys-83 is modified (3-oxoalanine (Cys)). His-144 is a catalytic residue. 2 disulfide bridges follow: Cys-149–Cys-156 and Cys-178–Cys-250. The chain crosses the membrane as a helical span at residues 193 to 216 (FAAGPLAALGASLAAMAAARWAGL). At 217–220 (ARVP) the chain is on the cytoplasmic side. A helical membrane pass occupies residues 221 to 242 (GWALAGTAAAMLAVGGPRSASC). The Lumenal segment spans residues 243–624 (LGFRPANCFL…ATTRTQATPR (382 aa)). Asp-350 and His-351 together coordinate Ca(2+). Disulfide bonds link Cys-454–Cys-495 and Cys-487–Cys-493. Residue Asn-465 is glycosylated (N-linked (GlcNAc...) asparagine). Residues 572–624 (GGAGGGAGAQDDSGHAHGDGSHAHDDPGHAQDRGDDDAHYGGHATTRTQATPR) form a disordered region. Over residues 583–611 (DSGHAHGDGSHAHDDPGHAQDRGDDDAHY) the composition is skewed to basic and acidic residues.

Belongs to the sulfatase family. As to quaternary structure, homodimer. Requires Ca(2+) as cofactor. The conversion to 3-oxoalanine (also known as C-formylglycine, FGly), of a serine or cysteine residue in prokaryotes and of a cysteine residue in eukaryotes, is critical for catalytic activity.

The protein resides in the microsome membrane. Its subcellular location is the endoplasmic reticulum membrane. It catalyses the reaction dehydroepiandrosterone 3-sulfate + H2O = 3beta-hydroxyandrost-5-en-17-one + sulfate + H(+). The catalysed reaction is estrone 3-sulfate + H2O = estrone + sulfate + H(+). Catalyzes the conversion of sulfated steroid precursors, such as dehydroepiandrosterone sulfate (DHEA-S) and estrone sulfate to the free steroid. This is Steryl-sulfatase (Sts) from Mus musculus (Mouse).